The chain runs to 60 residues: MSSKGGSSGGMWSVFIHGHDGSNKGSKTYTSGGGGMWGGGSSSGVKSGVNGGVKSGTGKI.

The disordered stretch occupies residues 1 to 60 (MSSKGGSSGGMWSVFIHGHDGSNKGSKTYTSGGGGMWGGGSSSGVKSGVNGGVKSGTGKI). 2 stretches are compositionally biased toward gly residues: residues 31 to 42 (SGGGGMWGGGSS) and 49 to 60 (VNGGVKSGTGKI).

Belongs to the orthopoxvirus OPG024 family.

In Vaccinia virus (strain Western Reserve) (VACV), this protein is OPG024 protein (OPG024).